Consider the following 247-residue polypeptide: RNA-free ribonuclease P (247 aa).

It belongs to the HARP family.

It carries out the reaction Endonucleolytic cleavage of RNA, removing 5'-extranucleotides from tRNA precursor.. In terms of biological role, RNA-free RNase P that catalyzes the removal of the 5'-leader sequence from pre-tRNA to produce the mature 5'-terminus. The polypeptide is RNA-free ribonuclease P (Methanosarcina mazei (strain ATCC BAA-159 / DSM 3647 / Goe1 / Go1 / JCM 11833 / OCM 88) (Methanosarcina frisia)).